Reading from the N-terminus, the 844-residue chain is MNIKFDMFVKDSNSIDSEELLNNYLTLNVVSQELLIQNAQKPLTPLSIEIGKTRTINKNIKSKLNFIMPSFCEYYELEGNYILYFKKLKIFEDFIIYKDQSIPISNQMEIKIGKGKVLVNGKKISIKDEEIKNNFIRDLNFLSSIKNFRNQYSHGNEIEAVESISKKENSINSLVIPTFIKFLGEIIIKTKDTIKFKNLMVLSDNFNILDDVIYQVENNELNLKNSKNSVVYKSIKKSIPIYLLSKVFEHTEFYILEKNNSILNFFCKKRIEDFNENSEDKEFNSTSENDSHESSIDLKCSSEVSQIKIERFHEYVSLFSKCISKNVDINHKNDKGDTALHNTIKNLKKESGPMVAALLSCGANANIRNNKHKVPLHFAIEFGDESIIKILLAFGAKPFLEDSISFSERDPGKIYKELNKSGQVLKILYEIGVITKLFDNFSVLQHVKTFILLEILFQNSMNILKSDIFSSILNNIFNQNIVRFKLIIQNLKEPPLSKFKKIEKFDRSELGKLIGKGANGKVYELHYNFGGVEKHCAVKEIKVDKYRVGAVLKEIESTALSQSPFTVGIYGYFEDEKNNFLYIFLEYCPNGNLFDIINKEKMKSFDEFFSYAFGVVHCTHDIHSNPKGALIHRDIKASNFLVDKNNLVKIGDFGTARFDCTLNLSSLKNGAGTVCFQAPEASRGKATIQSDIYSLGVVLFELCGAIPYKNYNYFFPFGDLKYLRVASAVSNYLRPILHPVIPQPLSDLIYSMLNHNEYDRPTSFEVFQKLKKVQEDYESNKEEWNSIFNTIDMKEDQQFHHERQEKVALMIKKKYLLTRPITESLVNHYDNIVFNIDYSISLNF.

2 ANK repeats span residues 335–367 and 371–400; these read KGDT…NANI and KHKV…KPFL. The Protein kinase domain maps to 508–773; the sequence is SELGKLIGKG…FEVFQKLKKV (266 aa). Residues 514-522 and Lys539 each bind ATP; that span reads IGKGANGKV. Asp634 functions as the Proton acceptor in the catalytic mechanism.

It belongs to the protein kinase superfamily. Ser/Thr protein kinase family.

It carries out the reaction L-seryl-[protein] + ATP = O-phospho-L-seryl-[protein] + ADP + H(+). It catalyses the reaction L-threonyl-[protein] + ATP = O-phospho-L-threonyl-[protein] + ADP + H(+). The chain is Probable serine/threonine-protein kinase DDB_G0267566 from Dictyostelium discoideum (Social amoeba).